Consider the following 351-residue polypeptide: Cobalt-precorrin-5B C(1)-methyltransferase (351 aa).

The protein belongs to the CbiD family.

The enzyme catalyses Co-precorrin-5B + S-adenosyl-L-methionine = Co-precorrin-6A + S-adenosyl-L-homocysteine. It participates in cofactor biosynthesis; adenosylcobalamin biosynthesis; cob(II)yrinate a,c-diamide from sirohydrochlorin (anaerobic route): step 6/10. In terms of biological role, catalyzes the methylation of C-1 in cobalt-precorrin-5B to form cobalt-precorrin-6A. This Thermosipho africanus (strain TCF52B) protein is Cobalt-precorrin-5B C(1)-methyltransferase.